The chain runs to 182 residues: Ribosome-recycling factor (182 aa).

This sequence belongs to the RRF family.

It is found in the cytoplasm. Functionally, responsible for the release of ribosomes from messenger RNA at the termination of protein biosynthesis. May increase the efficiency of translation by recycling ribosomes from one round of translation to another. This is Ribosome-recycling factor from Nostoc sp. (strain PCC 7120 / SAG 25.82 / UTEX 2576).